The following is a 309-amino-acid chain: Taste receptor type 2 member 66 (309 aa).

Met-1 is a topological domain (extracellular). A helical transmembrane segment spans residues 2–22 (ITFLPIIFSILIVVTFVIGNF). Over 23 to 46 (ANGFIALANSIEWFKRQKISFADQ) the chain is Cytoplasmic. The chain crosses the membrane as a helical span at residues 47–67 (ILTALAVPRVGLLWVLLLNWY). At 68–86 (ATELNPAFYSIEVRITAYN) the chain is on the extracellular side. A helical membrane pass occupies residues 87 to 107 (LWAVINHFSNWLATSLSIFYL). The Cytoplasmic portion of the chain corresponds to 108-126 (LKIANFSNLIFLRLKRRVK). The helical transmembrane segment at 127–147 (SVVLVILLGPLLFLVCHLFVI) threads the bilayer. At 148-178 (NMNQIIWTKEYEGNMTWKIKLRSAMYLSNTT) the chain is on the extracellular side. Asn-161 and Asn-176 each carry an N-linked (GlcNAc...) asparagine glycan. A helical membrane pass occupies residues 179–199 (VTILANLVPFTVTLISFLLLV). Residues 200–229 (CSLCKHLKKMQLHGKGSQDPSTKVHIKALQ) are Cytoplasmic-facing. Residues 230–250 (TVISFLLLCAIYFVSVIISVW) form a helical membrane-spanning segment. The Extracellular portion of the chain corresponds to 251-259 (SFKNLENKP). A helical transmembrane segment spans residues 260-280 (VFMFCQAIGFSCSSAHPFILI). The Cytoplasmic segment spans residues 281–309 (WGNKKLKQPFLSVLWQMRYWVKGEKPSSS).

The protein belongs to the G-protein coupled receptor T2R family.

The protein resides in the membrane. Its function is as follows. Receptor that may play a role in the perception of bitterness and is gustducin-linked. May play a role in sensing the chemical composition of the gastrointestinal content. The activity of this receptor may stimulate alpha gustducin, mediate PLC-beta-2 activation and lead to the gating of TRPM5. The sequence is that of Taste receptor type 2 member 66 (TAS2R66) from Pan paniscus (Pygmy chimpanzee).